The following is a 121-amino-acid chain: Basic phospholipase A2 caudoxin (121 aa).

Cystine bridges form between Cys25–Cys114, Cys27–Cys43, Cys42–Cys94, Cys48–Cys121, Cys49–Cys87, Cys56–Cys80, and Cys74–Cys85. Residues Tyr26, Gly28, and Gly30 each coordinate Ca(2+). His46 is an active-site residue. Asp47 is a binding site for Ca(2+). The active site involves Asp88.

Belongs to the phospholipase A2 family. Group II subfamily. D49 sub-subfamily. In terms of assembly, monomer. The cofactor is Ca(2+). Expressed by the venom gland.

It is found in the secreted. The catalysed reaction is a 1,2-diacyl-sn-glycero-3-phosphocholine + H2O = a 1-acyl-sn-glycero-3-phosphocholine + a fatty acid + H(+). Its function is as follows. Snake venom phospholipase A2 (PLA2) that shows anticoagulant activity and presynaptic neurotoxicity. Acts as an anticoagulant toxin by inhibiting prothrombinase complex formation. Shows about 50% of the prothrombinase complex inhibition compared to CM-IV of N.nigricollis venom. Acts as a neurotoxin by inhibiting neuromuscular transmission by blocking acetylcholine release from the nerve termini. PLA2 catalyzes the calcium-dependent hydrolysis of the 2-acyl groups in 3-sn-phosphoglycerides. The chain is Basic phospholipase A2 caudoxin from Bitis caudalis (Horned adder).